A 783-amino-acid chain; its full sequence is E3 UFM1-protein ligase 1 homolog (783 aa).

The disordered stretch occupies residues Thr406 to Ser476. Positions Lys446 to Ala457 are enriched in basic residues.

This sequence belongs to the UFL1 family.

In terms of biological role, E3 UFM1-protein ligase that mediates ufmylation of target proteins. The protein is E3 UFM1-protein ligase 1 homolog of Drosophila grimshawi (Hawaiian fruit fly).